Reading from the N-terminus, the 136-residue chain is Large ribosomal subunit protein uL16 (136 aa).

This sequence belongs to the universal ribosomal protein uL16 family. In terms of assembly, part of the 50S ribosomal subunit.

Binds 23S rRNA and is also seen to make contacts with the A and possibly P site tRNAs. The sequence is that of Large ribosomal subunit protein uL16 from Shewanella halifaxensis (strain HAW-EB4).